The chain runs to 238 residues: MNSNASNTPIAIGISQIFPCSYLDGQQEQLLVIQEETLDPILFDRLLAIGFRRSGSAIYKPRCPRCSACQPIRLPINEFMPSKRQKRTLAHNRDLTWRMTSEHTEAQYALYEKYIRERHFDGPMFPPSKSQYEQFLFCHWLPPTFIEVYDGNRLLAVAVTDTLPNSLSAIYSYFDPDEERRSLGSLLILLQCRLAKLQDKEFLYLGYQIDANRKMSYKRLYRPYQILTPQGWEYSQVC.

The protein belongs to the R-transferase family. Bpt subfamily.

The protein resides in the cytoplasm. The enzyme catalyses N-terminal L-glutamyl-[protein] + L-leucyl-tRNA(Leu) = N-terminal L-leucyl-L-glutamyl-[protein] + tRNA(Leu) + H(+). It catalyses the reaction N-terminal L-aspartyl-[protein] + L-leucyl-tRNA(Leu) = N-terminal L-leucyl-L-aspartyl-[protein] + tRNA(Leu) + H(+). Its function is as follows. Functions in the N-end rule pathway of protein degradation where it conjugates Leu from its aminoacyl-tRNA to the N-termini of proteins containing an N-terminal aspartate or glutamate. The polypeptide is Aspartate/glutamate leucyltransferase (Shewanella sp. (strain ANA-3)).